The following is a 510-amino-acid chain: NAD(P)H-quinone oxidoreductase subunit 2 B, chloroplastic (510 aa).

The next 13 membrane-spanning stretches (helical) occupy residues 24 to 44, 57 to 77, 99 to 119, 124 to 144, 149 to 169, 183 to 203, 227 to 247, 295 to 315, 323 to 343, 354 to 374, 395 to 415, 418 to 438, and 484 to 504; these read LLLF…GLIL, IPWL…SLLF, IFQF…VEYI, MAIT…MFLC, LITI…LSGY, YLLM…WLYG, PGIS…LSPA, WHLL…LIAI, MLAY…IVGD, YMLF…LFGL, ALSL…AGFF, LYLF…IGLL, and MIVC…IIAI.

Belongs to the complex I subunit 2 family. NDH is composed of at least 16 different subunits, 5 of which are encoded in the nucleus.

Its subcellular location is the plastid. The protein resides in the chloroplast thylakoid membrane. The enzyme catalyses a plastoquinone + NADH + (n+1) H(+)(in) = a plastoquinol + NAD(+) + n H(+)(out). The catalysed reaction is a plastoquinone + NADPH + (n+1) H(+)(in) = a plastoquinol + NADP(+) + n H(+)(out). In terms of biological role, NDH shuttles electrons from NAD(P)H:plastoquinone, via FMN and iron-sulfur (Fe-S) centers, to quinones in the photosynthetic chain and possibly in a chloroplast respiratory chain. The immediate electron acceptor for the enzyme in this species is believed to be plastoquinone. Couples the redox reaction to proton translocation, and thus conserves the redox energy in a proton gradient. The protein is NAD(P)H-quinone oxidoreductase subunit 2 B, chloroplastic of Lactuca sativa (Garden lettuce).